The primary structure comprises 317 residues: Transaldolase (317 aa).

Catalysis depends on Lys-132, which acts as the Schiff-base intermediate with substrate.

It belongs to the transaldolase family. Type 1 subfamily. Homodimer.

The protein resides in the cytoplasm. It carries out the reaction D-sedoheptulose 7-phosphate + D-glyceraldehyde 3-phosphate = D-erythrose 4-phosphate + beta-D-fructose 6-phosphate. It functions in the pathway carbohydrate degradation; pentose phosphate pathway; D-glyceraldehyde 3-phosphate and beta-D-fructose 6-phosphate from D-ribose 5-phosphate and D-xylulose 5-phosphate (non-oxidative stage): step 2/3. Transaldolase is important for the balance of metabolites in the pentose-phosphate pathway. The protein is Transaldolase of Haemophilus influenzae (strain PittGG).